The following is a 220-amino-acid chain: Large ribosomal subunit protein uL16 (220 aa).

The protein belongs to the universal ribosomal protein uL16 family. As to quaternary structure, component of the small ribosomal subunit. Mature ribosomes consist of a small (40S) and a large (60S) subunit. The 40S subunit contains about 33 different proteins and 1 molecule of RNA (18S). The 60S subunit contains about 49 different proteins and 3 molecules of RNA (25S, 5.8S and 5S).

The protein is Large ribosomal subunit protein uL16 (RPL10) of Vitis riparia (Frost grape).